The chain runs to 129 residues: Glycine cleavage system H protein (129 aa).

One can recognise a Lipoyl-binding domain in the interval 24-106 (TYTVGITEHA…YTGGWIFKIK (83 aa)). N6-lipoyllysine is present on K65.

It belongs to the GcvH family. In terms of assembly, the glycine cleavage system is composed of four proteins: P, T, L and H. The cofactor is (R)-lipoate.

Functionally, the glycine cleavage system catalyzes the degradation of glycine. The H protein shuttles the methylamine group of glycine from the P protein to the T protein. The sequence is that of Glycine cleavage system H protein from Salmonella choleraesuis (strain SC-B67).